We begin with the raw amino-acid sequence, 714 residues long: Stellatatriene synthase (714 aa).

The stellata-2,6,19-trien synthase stretch occupies residues 1–325 (MEYKFSTVVD…RYNSSGSFSD (325 aa)). Mg(2+)-binding residues include aspartate 92 and aspartate 96. Positions 92 to 96 (DDVTD) match the DDXXD motif 1 motif. Residues 276–284 (YLKIVEEYK) carry the NSE motif motif. Residues 326–713 (HQLELMKNGV…LRLIMELLKT (388 aa)) form a geranylgeranyl diphosphate synthase region. A disordered region spans residues 332 to 356 (KNGVPKDPASGSTNGTSNGTSNGTS). Residues 341 to 356 (SGSTNGTSNGTSNGTS) are compositionally biased toward low complexity. The isopentenyl diphosphate site is built by lysine 434, arginine 437, and histidine 466. The Mg(2+) site is built by aspartate 473 and aspartate 477. The DDXXD motif 2 signature appears at 473 to 477 (DDVED). Arginine 482 is a binding site for dimethylallyl diphosphate. Isopentenyl diphosphate is bound at residue arginine 483. 6 residues coordinate dimethylallyl diphosphate: lysine 560, threonine 561, glutamine 596, asparagine 603, lysine 613, and lysine 623.

In the N-terminal section; belongs to the terpene synthase family. It in the C-terminal section; belongs to the FPP/GGPP synthase family. As to quaternary structure, hexamer.

The catalysed reaction is 4 isopentenyl diphosphate + dimethylallyl diphosphate = (2E,6E,10E,14E)-geranylfarnesyl diphosphate + 4 diphosphate. It carries out the reaction (2E,6E,10E,14E)-geranylfarnesyl diphosphate = stellata-2,6,19-triene + diphosphate. Its pathway is secondary metabolite biosynthesis; terpenoid biosynthesis. Its function is as follows. Multifunctional diterpene synthase; part of the gene cluster that mediates the biosynthesis of the sesterterpene stellatic acid. The first step in the pathway is performed by the stellatatriene synthase that possesses both prenyl transferase and terpene cyclase activity, converting isopentenyl diphosphate and dimethylallyl diphosphate into geranylgeranyl diphosphate (GGDP) and then converting GGDP into stellata-2,6,19-triene. The cytochrome P450 monooxygenase Stl-P450 then catalyzes three successive oxidation reactions on the C-20 methyl group to generate the carboxylic acid of stellatic acid. The polypeptide is Stellatatriene synthase (Emericella variicolor (Aspergillus stellatus)).